Consider the following 181-residue polypeptide: uncharacterized protein (181 aa).

In terms of domain architecture, Macro spans M1 to L178.

This is an uncharacterized protein from Sulfolobus acidocaldarius (strain ATCC 33909 / DSM 639 / JCM 8929 / NBRC 15157 / NCIMB 11770).